The primary structure comprises 131 residues: Methylglyoxal synthase (131 aa).

The 131-residue stretch at 1–131 (MKIALIAHDK…GDLDYRKLRK (131 aa)) folds into the MGS-like domain. Residues His8, Lys12, 34 to 37 (TGTT), and 54 to 55 (SG) each bind substrate. Residue Asp60 is the Proton donor/acceptor of the active site. A substrate-binding site is contributed by His87.

It belongs to the methylglyoxal synthase family.

It catalyses the reaction dihydroxyacetone phosphate = methylglyoxal + phosphate. In terms of biological role, catalyzes the formation of methylglyoxal from dihydroxyacetone phosphate. The polypeptide is Methylglyoxal synthase (Bacillus cereus (strain AH820)).